The chain runs to 919 residues: Probable glucan 1,3-alpha-glucosidase (919 aa).

An N-terminal signal peptide occupies residues 1–28 (MDPPPRPRPHRVAVLLLLLLASSPAARA). The active-site Nucleophile is the Asp510. The active site involves Glu513. Asp586 serves as the catalytic Proton donor. An N-linked (GlcNAc...) asparagine glycan is attached at Asn802.

This sequence belongs to the glycosyl hydrolase 31 family. Heterodimer of a catalytic alpha subunit and a beta subunit.

The protein resides in the endoplasmic reticulum. The catalysed reaction is N(4)-(alpha-D-Glc-(1-&gt;3)-alpha-D-Man-(1-&gt;2)-alpha-D-Man-(1-&gt;2)-alpha-D-Man-(1-&gt;3)-[alpha-D-Man-(1-&gt;2)-alpha-D-Man-(1-&gt;3)-[alpha-D-Man-(1-&gt;2)-alpha-D-Man-(1-&gt;6)]-alpha-D-Man-(1-&gt;6)]-beta-D-Man-(1-&gt;4)-beta-D-GlcNAc-(1-&gt;4)-beta-D-GlcNAc)-L-asparaginyl-[protein] + H2O = N(4)-(alpha-D-Man-(1-&gt;2)-alpha-D-Man-(1-&gt;2)-alpha-D-Man-(1-&gt;3)-[alpha-D-Man-(1-&gt;2)-alpha-D-Man-(1-&gt;3)-[alpha-D-Man-(1-&gt;2)-alpha-D-Man-(1-&gt;6)]-alpha-D-Man-(1-&gt;6)]-beta-D-Man-(1-&gt;4)-beta-D-GlcNAc-(1-&gt;4)-beta-D-GlcNAc)-L-asparaginyl-[protein] (N-glucan mannose isomer 9A1,2,3B1,2,3) + beta-D-glucose. It carries out the reaction N(4)-(alpha-D-Glc-(1-&gt;3)-alpha-D-Glc-(1-&gt;3)-alpha-D-Man-(1-&gt;2)-alpha-D-Man-(1-&gt;2)-alpha-D-Man-(1-&gt;3)-[alpha-D-Man-(1-&gt;2)-alpha-D-Man-(1-&gt;3)-[alpha-D-Man-(1-&gt;2)-alpha-D-Man-(1-&gt;6)]-alpha-D-Man-(1-&gt;6)]-beta-D-Man-(1-&gt;4)-beta-D-GlcNAc-(1-&gt;4)-beta-D-GlcNAc)-L-asparaginyl-[protein] + H2O = N(4)-(alpha-D-Glc-(1-&gt;3)-alpha-D-Man-(1-&gt;2)-alpha-D-Man-(1-&gt;2)-alpha-D-Man-(1-&gt;3)-[alpha-D-Man-(1-&gt;2)-alpha-D-Man-(1-&gt;3)-[alpha-D-Man-(1-&gt;2)-alpha-D-Man-(1-&gt;6)]-alpha-D-Man-(1-&gt;6)]-beta-D-Man-(1-&gt;4)-beta-D-GlcNAc-(1-&gt;4)-beta-D-GlcNAc)-L-asparaginyl-[protein] + beta-D-glucose. It functions in the pathway glycan metabolism; N-glycan metabolism. Cleaves sequentially the 2 innermost alpha-1,3-linked glucose residues from the Glc(2)Man(9)GlcNAc(2) oligosaccharide precursor of immature glycoproteins. May be required for defense response elicited by pathogen-associated molecular patterns (PAMPs). The polypeptide is Probable glucan 1,3-alpha-glucosidase (Oryza sativa subsp. japonica (Rice)).